The sequence spans 283 residues: Elongation factor Ts (283 aa).

The tract at residues 80 to 83 (TDFV) is involved in Mg(2+) ion dislocation from EF-Tu.

This sequence belongs to the EF-Ts family.

It localises to the cytoplasm. In terms of biological role, associates with the EF-Tu.GDP complex and induces the exchange of GDP to GTP. It remains bound to the aminoacyl-tRNA.EF-Tu.GTP complex up to the GTP hydrolysis stage on the ribosome. This Erwinia tasmaniensis (strain DSM 17950 / CFBP 7177 / CIP 109463 / NCPPB 4357 / Et1/99) protein is Elongation factor Ts.